Consider the following 1042-residue polypeptide: MFKKVENKANFPKIEEKILKFWNDNKIFEKSIKQREGCEEFTFYDGPPFATGLPHFGHFVPNTIKDIIPRYQTMQGKYVKRNFGWDTHGLPVEYEVEKKLGISGKYEIENYGIENFNKECRKIVLRYTEEWKNIILRLGRWVDFEKGYKTMDISFMESVWWVFKNLYEKGLIYESYYVLPYSPKLATPLSNFEVNLGEYKEVNDPSLTIKFKIKDKNEYLLVWTTTPWTLPSNLGIAVGQEIEYSKIFDKTKEEILILGSKKLNSYYDDENSYTIIEKFKGSKLEGIEYEPIFNYFLEQKDKGAFKVHTADYVTTDDGTGIVHIAPFGEEDYKILKKHTNVDIIDPLDAECKFTNQVKDFKGLFVKDADKKIIENLKLRNFLFKRENYLHRYPFCYRTNCPIIYRPISSWFVNVEKIKTKLLEVNEKINWMPAHLKKGRFGKWLENAKDWAISRNRFWGNPIPIWICSKTGKKICIGSKKELENLSGQKIEDLHKDQIDKITWPSKDGGKFIRTSEVLDCWFESGAMPYASNHYPFTNEINFKNIFPADFIAEGLDQTRGWFYTLTILGTALFENTAFKNVIVNGLVLSSDGRKMSKSFKNYTDPMQVINTFGADALRLYLIMSPVVKADDLKYSDNGVRDVLKNIIIPIWNAYSFFTTYAIIDKFKPPKNISLAKNNNLDKWIISELESLKKILNTEIDKYNLTKSIESLLEFIDKLNNWYIRRSRRRFWKSENDKDKNDAYETLYYAIKTLMILLAPFIPFITEEIYQNLKTDEDKQSIHLNDYPKANENFINKTIEEKINLARKITSMARSLRSLHNIKIRMPISTIYIVTKNQNEQNMLMEMQEIILDEINAKEMKIKANEEELITYKAKANFKELGKKLGKDMKAVSAEISKLKNEDIIKIINGTSYEIKVANAKHYLSLNDIILEREEKENLKVINEESITIGIDSLITKELYLEGLTREFVRQIQNLRKEKNFDVSDRINLYIENSETLKEMLNKFEKYIKTETLALNIILNKSKLEKKINLADDIFTLIGIEKC.

A 'HIGH' region motif is present at residues Pro48–His58. The short motif at Lys594–Ser598 is the 'KMSKS' region element. ATP is bound at residue Lys597.

Belongs to the class-I aminoacyl-tRNA synthetase family. IleS type 2 subfamily. In terms of assembly, monomer. Requires Zn(2+) as cofactor.

Its subcellular location is the cytoplasm. The enzyme catalyses tRNA(Ile) + L-isoleucine + ATP = L-isoleucyl-tRNA(Ile) + AMP + diphosphate. Functionally, catalyzes the attachment of isoleucine to tRNA(Ile). As IleRS can inadvertently accommodate and process structurally similar amino acids such as valine, to avoid such errors it has two additional distinct tRNA(Ile)-dependent editing activities. One activity is designated as 'pretransfer' editing and involves the hydrolysis of activated Val-AMP. The other activity is designated 'posttransfer' editing and involves deacylation of mischarged Val-tRNA(Ile). The chain is Isoleucine--tRNA ligase from Borreliella burgdorferi (strain ZS7) (Borrelia burgdorferi).